A 202-amino-acid chain; its full sequence is Glycerol-3-phosphate acyltransferase (202 aa).

Transmembrane regions (helical) follow at residues methionine 2–isoleucine 22, phenylalanine 54–leucine 74, phenylalanine 85–tyrosine 105, valine 120–leucine 140, lysine 141–serine 161, and leucine 162–isoleucine 182.

This sequence belongs to the PlsY family. Probably interacts with PlsX.

It is found in the cell membrane. It catalyses the reaction an acyl phosphate + sn-glycerol 3-phosphate = a 1-acyl-sn-glycero-3-phosphate + phosphate. It participates in lipid metabolism; phospholipid metabolism. Catalyzes the transfer of an acyl group from acyl-phosphate (acyl-PO(4)) to glycerol-3-phosphate (G3P) to form lysophosphatidic acid (LPA). This enzyme utilizes acyl-phosphate as fatty acyl donor, but not acyl-CoA or acyl-ACP. This Staphylococcus aureus (strain USA300) protein is Glycerol-3-phosphate acyltransferase.